Here is a 153-residue protein sequence, read N- to C-terminus: Putative pre-16S rRNA nuclease (153 aa).

It belongs to the YqgF nuclease family.

The protein resides in the cytoplasm. In terms of biological role, could be a nuclease involved in processing of the 5'-end of pre-16S rRNA. The chain is Putative pre-16S rRNA nuclease from Chloroflexus aurantiacus (strain ATCC 29366 / DSM 635 / J-10-fl).